A 227-amino-acid chain; its full sequence is Cytochrome c oxidase subunit 2 (227 aa).

Residues 1-14 (MAYPMQLGFQDATS) lie on the Mitochondrial intermembrane side of the membrane. A helical transmembrane segment spans residues 15–45 (PIMEELLHFHDHTLMIVFLISSLVLYVISLM). At 46-59 (LTTKLTHTSTMDAQ) the chain is on the mitochondrial matrix side. Residues 60 to 87 (EVETIWTILPAIILILIALPSLRILYMM) form a helical membrane-spanning segment. Residues 88–227 (DEINNPSLTV…YFEKWSASML (140 aa)) are Mitochondrial intermembrane-facing. 6 residues coordinate Cu cation: His-161, Cys-196, Glu-198, Cys-200, His-204, and Met-207. Residue Glu-198 coordinates Mg(2+). A Phosphotyrosine modification is found at Tyr-218.

It belongs to the cytochrome c oxidase subunit 2 family. In terms of assembly, component of the cytochrome c oxidase (complex IV, CIV), a multisubunit enzyme composed of 14 subunits. The complex is composed of a catalytic core of 3 subunits MT-CO1, MT-CO2 and MT-CO3, encoded in the mitochondrial DNA, and 11 supernumerary subunits COX4I, COX5A, COX5B, COX6A, COX6B, COX6C, COX7A, COX7B, COX7C, COX8 and NDUFA4, which are encoded in the nuclear genome. The complex exists as a monomer or a dimer and forms supercomplexes (SCs) in the inner mitochondrial membrane with NADH-ubiquinone oxidoreductase (complex I, CI) and ubiquinol-cytochrome c oxidoreductase (cytochrome b-c1 complex, complex III, CIII), resulting in different assemblies (supercomplex SCI(1)III(2)IV(1) and megacomplex MCI(2)III(2)IV(2)). Found in a complex with TMEM177, COA6, COX18, COX20, SCO1 and SCO2. Interacts with TMEM177 in a COX20-dependent manner. Interacts with COX20. Interacts with COX16. Cu cation serves as cofactor.

Its subcellular location is the mitochondrion inner membrane. It catalyses the reaction 4 Fe(II)-[cytochrome c] + O2 + 8 H(+)(in) = 4 Fe(III)-[cytochrome c] + 2 H2O + 4 H(+)(out). Component of the cytochrome c oxidase, the last enzyme in the mitochondrial electron transport chain which drives oxidative phosphorylation. The respiratory chain contains 3 multisubunit complexes succinate dehydrogenase (complex II, CII), ubiquinol-cytochrome c oxidoreductase (cytochrome b-c1 complex, complex III, CIII) and cytochrome c oxidase (complex IV, CIV), that cooperate to transfer electrons derived from NADH and succinate to molecular oxygen, creating an electrochemical gradient over the inner membrane that drives transmembrane transport and the ATP synthase. Cytochrome c oxidase is the component of the respiratory chain that catalyzes the reduction of oxygen to water. Electrons originating from reduced cytochrome c in the intermembrane space (IMS) are transferred via the dinuclear copper A center (CU(A)) of subunit 2 and heme A of subunit 1 to the active site in subunit 1, a binuclear center (BNC) formed by heme A3 and copper B (CU(B)). The BNC reduces molecular oxygen to 2 water molecules using 4 electrons from cytochrome c in the IMS and 4 protons from the mitochondrial matrix. The sequence is that of Cytochrome c oxidase subunit 2 (MT-CO2) from Rusa unicolor (Sambar).